Reading from the N-terminus, the 7094-residue chain is Replicase polyprotein 1ab (7094 aa).

Residues 54–196 (PENHVMVDCR…PWVMYLRKCG (143 aa)) enclose the CoV Nsp1 globular domain. The BetaCoV Nsp1 C-terminal domain maps to 216–246 (FKVEDAYDLVHDEPKGKFSKKAYALIRGYRG). In terms of domain architecture, CoV Nsp2 N-terminal spans 250–519 (LLYVDQYGCD…LICKALYLDY (270 aa)). C392, C397, C413, and C416 together coordinate Zn(2+). Residues 392 to 416 (CEQDLCDFKGWVPGNMIDGFACTTC) form a C4 region. A CoV Nsp2 middle domain is found at 524–713 (CGNLHQRELL…AQAFRSVAKV (190 aa)). One can recognise a CoV Nsp2 C-terminal domain in the interval 733–851 (RRRICLSGSK…LDQAWRVPCA (119 aa)). The Ubiquitin-like 1 domain occupies 853-966 (RRVTFKEQPT…LYCAFTAPED (114 aa)). Residues 1036–1274 (DLESVIQDYE…IAQLYGSCIT (239 aa)) form the Peptidase C16 1 domain. C1074 serves as the catalytic For PL1-PRO activity. Zn(2+) contacts are provided by C1151, C1154, C1177, and C1179. The C4-type 1 zinc finger occupies 1151-1179 (CIKCDLALKLKGLDAMFFYGDVVSHVCKC). Residues H1225 and D1236 each act as for PL1-PRO activity in the active site. Residues 1275–1435 (PNVCFVKGDI…LISKCQITAV (161 aa)) enclose the Macro domain. The 73-residue stretch at 1491–1563 (DDARTFVQSN…VAQIKALFLD (73 aa)) folds into the DPUP domain. The Ubiquitin-like 2 domain maps to 1562-1617 (LDKVDILLTVDGVNFTNRFVPVGENFGKSLGNVFCDGVNVTKHKCDINYKGKVFFQ). One can recognise a Peptidase C16 2 domain in the interval 1631–1892 (SSFNFDQKEL…KIEYKPDLSQ (262 aa)). C1671 serves as the catalytic For PL2-PRO activity. Zn(2+) is bound by residues C1749, C1751, C1783, and C1785. The C4-type 2 zinc finger occupies 1749–1785 (CKCGVKQEQRTGVDAVMHFGTLSREDLEIGYTVDCSC). Residues H1828 and D1842 each act as for PL2-PRO activity in the active site. Residues 1906–2007 (IKAQFKTFEK…TYFNRPLLVD (102 aa)) form the Nucleic acid-binding domain. The G2M domain maps to 2020–2169 (DDGGDISESD…ADNKVIYTTE (150 aa)). Helical transmembrane passes span 2138–2158 (ISACFNFIKWLFVLLFGWIKI), 2199–2219 (ACIIATIFLLWFNFIYANVIF), and 2227–2247 (IGFLPTFVGKIAQWIKSTFSL). The segment at 2138–2385 (ISACFNFIKW…ASFIKLFSLF (248 aa)) is HD1. The 3Ecto domain maps to 2235 to 2296 (GKIAQWIKST…AIDVVQYEAD (62 aa)). 2 disulfide bridges follow: C2251/C2275 and C2266/C2272. Helical transmembrane passes span 2313–2333 (LIVSYALYTAWFYPLFALISI), 2343–2363 (LFMLSTLHWSVRLLVSLANML), and 2365–2385 (AHVFMRFYIIIASFIKLFSLF). The Y1 stretch occupies residues 2383 to 2473 (SLFRHVAYGC…ELKRPIQPTD (91 aa)). The CoV Nsp3 Y domain maps to 2383–2750 (SLFRHVAYGC…LTTPFSLKGG (368 aa)). Residues H2387, C2392, C2397, C2400, C2433, H2436, C2440, and C2443 each coordinate Zn(2+). Residues 2387-2400 (HVAYGCSKPGCLFC) form a ZF1 region. The tract at residues 2433–2443 (CSKHQWNCIDC) is ZF2. Residues 2474–2566 (VAYHTVTDVK…MVDKNLITTA (93 aa)) form a Y2 region. Positions 2474–2750 (VAYHTVTDVK…LTTPFSLKGG (277 aa)) are coV-Y. The Y3 stretch occupies residues 2567–2649 (NTGTSVTETM…DSVMSAVSAG (83 aa)). A Y4 region spans residues 2650-2750 (LELTDESCNN…LTTPFSLKGG (101 aa)). The next 7 helical transmembrane spans lie at 2752–2772 (VFSYFVYVCFLLSLVCFIGLW), 2824–2844 (STFGLSYYSNSMACPIVVAVV), 3009–3029 (VFDLIYQLFKGLAQPVDFLAL), 3031–3051 (ASSIAGAILAVIVVLVFYYLI), 3063–3083 (IVFVNVIVWCVNFMMLFVFQV), 3090–3110 (VYAICYFYATLYFPSEISVIM), and 3115–3135 (LVMYGTIMPLWFCLLYISVVV). The HD2 stretch occupies residues 2752–3135 (VFSYFVYVCF…FCLLYISVVV (384 aa)). Residues 3149–3246 (LGTSVRSDGT…TASVSTSFLQ (98 aa)) form the Nsp4C domain. The region spanning 3247–3549 (SGIVKMVNPT…YQQLAGIKLQ (303 aa)) is the Peptidase C30 domain. Residues H3287 and C3391 each act as for 3CL-PRO activity in the active site. 7 consecutive transmembrane segments (helical) span residues 3558 to 3578 (GIVCWIMASTFLFSCIITAFV), 3588 to 3608 (TNMLSITFCALCVISLAMLLV), 3614 to 3634 (YLTMYIIPVLFTLLYNNYLVV), 3657 to 3677 (TYTDEVIYGMLLLIGMVFVTL), 3684 to 3704 (LFSFIMFVGRVISVVSLWYMG), 3711 to 3731 (ILLMLASLFGTYTWTTALSMA), and 3755 to 3775 (IVLVCYLFIGYIISCYWGLFS). Residues 3558-3775 (GIVCWIMAST…IISCYWGLFS (218 aa)) are HD3. Residues 3837–3925 (SKLTDVKCAN…DYAKDNTVLQ (89 aa)) form the RdRp Nsp7 cofactor domain. The 197-residue stretch at 3926 to 4122 (ALQSEFVNMA…HNEVSATVLQ (197 aa)) folds into the RdRp Nsp8 cofactor domain. The region spanning 4123-4232 (NNELMPAKLK…GTISSTVRLQ (110 aa)) is the Nsp9 ssRNA-binding domain. The 138-residue stretch at 4233–4370 (AGTATEYASN…CVSTDTTVQS (138 aa)) folds into the ExoN/MTase coactivator domain. Zn(2+) is bound by residues C4306, C4309, H4315, C4322, C4348, C4351, C4359, and C4361. 2 zinc fingers span residues 4306-4322 (CIYCRARVEHPDVDGLC) and 4348-4361 (CQVCGFWRDGSCSC). Residues 4375–4630 (FLNRVRGTSV…DCELYVNNAY (256 aa)) enclose the NiRAN domain. Positions 4578 and 4587 each coordinate Mn(2+). Residues 4631–4729 (RLFDLVQYDF…MNMDVDTHRY (99 aa)) form the Nsp12 Interface domain. Zn(2+) contacts are provided by H4660, C4666, C4671, C4675, and C4852. One can recognise a Nsp12 RNA-dependent RNA polymerase domain in the interval 4730-5297 (RLSLKDLLLY…NMYLRSAVMQ (568 aa)). Residues 4732 to 4946 (SLKDLLLYAA…HQKCLKSIAA (215 aa)) are rdRp Fingers N-ter. Residues 4947 to 4985 (TRGVPVVIGTTKFYGGWDDMLRRLIKDVDNPVLMGWDYP) are rdRp Palm N-ter. The region spanning 4977–5139 (PVLMGWDYPK…CYNSDYASKG (163 aa)) is the RdRp catalytic domain. The interval 4986–5044 (KCDRAMPNILRIVSSLVLARKHEACCSQSDRFYRLANECAQVLSEIVMCGGCYYVKPGG) is rdRp Fingers C-ter. Zn(2+) is bound by residues H5007, C5010, and C5011. The segment at 5045–5180 (TSSGDATTAF…NNGPHEFCSQ (136 aa)) is rdRp Palm C-ter. Active-site residues include S5124, D5125, and D5126. A rdRp Thumb region spans residues 5181–5297 (HTMLVKMDGD…NMYLRSAVMQ (117 aa)). Positions 5298–5410 (SVGACVVCSS…DDFNRIASCK (113 aa)) constitute a CV ZBD domain. Residues C5302, C5305, C5313, C5316, C5323, C5326, H5330, H5336, C5347, C5352, C5369, and H5372 each coordinate Zn(2+). A (+)RNA virus helicase ATP-binding domain is found at 5553–5734 (SVLETFQNNV…MCCLGPDIFL (182 aa)). 5578 to 5585 (GPPGTGKS) lines the ATP pocket. Residues 5735 to 5904 (GTCYRCPKEI…VETRVQCSTN (170 aa)) form the (+)RNA virus helicase C-terminal domain. The 216-residue stretch at 5971-6186 (LFITKEEAVK…RCLAVYDCFC (216 aa)) folds into the ExoN domain. Catalysis depends on residues D5989, E5991, and E6090. The Zn(2+) site is built by C6106, C6109, C6125, H6128, H6156, C6160, and H6163. Catalysis depends on residues H6167 and D6172. Position 6178 (C6178) interacts with Zn(2+). Positions 6195–6421 (YPIISNELSI…NLWNTFTKLQ (227 aa)) constitute an N7-MTase domain. 6230–6236 (DIGNPKA) contacts S-adenosyl-L-methionine. A gpppA-binding region spans residues 6308–6322 (CNGGSLYVNKHAFHT). Residues C6346, C6367, C6378, and H6381 each coordinate Zn(2+). A Nsp15 N-terminal oligomerization domain is found at 6422-6482 (SLENVVYNLV…NVAVELFAKR (61 aa)). The region spanning 6483-6603 (SIRHHPELKL…FAVRKEGQDV (121 aa)) is the AV-Nsp11N/CoV-Nsp15M domain. The 140-residue stretch at 6653–6792 (TCRTDMEKDF…NDEKVMTFYP (140 aa)) folds into the NendoU domain. Active-site residues include H6683, H6698, K6738, K6841, D6925, K6965, and E6998. A Nidovirus-type SAM-dependent 2'-O-MTase domain is found at 6797-7091 (ASDWKPGYSM…KEVFVGDSLV (295 aa)).

The protein belongs to the coronaviruses polyprotein 1ab family. Interacts with host PHB and PHB2. As to quaternary structure, interacts with papain-like protease nsp3 and non-structural protein 6. In terms of assembly, monomer. Homodimer. Only the homodimer shows catalytic activity. Interacts with nsp8 and nsp12 to form the replication-transcription complex (RTC): nsp12, nsp7, two subunits of nsp8, and up to two subunits of nsp13. As to quaternary structure, interacts with nsp7, nsp13 and nsp12 to form the replication-transcription complex (RTC): nsp12, nsp7, two subunits of nsp8, and up to two subunits of nsp13. In terms of assembly, interacts with nsp12. Interacts with proofreading exoribonuclease nsp14 and 2'-O-methyltransferase nsp16; these interactions enhance nsp14 and nsp16 enzymatic activities. As to quaternary structure, interacts with nsp7 and nsp8 to form the replication-transcription complex (RTC): nsp12, nsp7, two subunits of nsp8, and up to two subunits of nsp13. Interacts with nsp9. In terms of assembly, interacts with nsp8 to form the replication-transcription complex (RTC): nsp12, nsp7, two subunits of nsp8, and up to two subunits of nsp13. Mn(2+) serves as cofactor. Requires Mg(2+) as cofactor. In terms of processing, specific enzymatic cleavages in vivo by its own proteases yield mature proteins. 3CL-PRO and PL-PRO proteinases are autocatalytically processed.

It is found in the host membrane. It localises to the host cytoplasm. Its subcellular location is the host perinuclear region. The protein resides in the host endoplasmic reticulum-Golgi intermediate compartment. The enzyme catalyses RNA(n) + a ribonucleoside 5'-triphosphate = RNA(n+1) + diphosphate. It carries out the reaction ATP + H2O = ADP + phosphate + H(+). The catalysed reaction is Thiol-dependent hydrolysis of ester, thioester, amide, peptide and isopeptide bonds formed by the C-terminal Gly of ubiquitin (a 76-residue protein attached to proteins as an intracellular targeting signal).. It catalyses the reaction a 5'-end (N(7)-methyl 5'-triphosphoguanosine)-ribonucleoside in mRNA + S-adenosyl-L-methionine = a 5'-end (N(7)-methyl 5'-triphosphoguanosine)-(2'-O-methyl-ribonucleoside) in mRNA + S-adenosyl-L-homocysteine + H(+). The enzyme catalyses uridylyl-uridylyl-ribonucleotide-RNA = a 3'-end uridylyl-2',3'-cyclophospho-uridine-RNA + a 5'-end dephospho-ribonucleoside-RNA. It carries out the reaction a 5'-end diphospho-ribonucleoside in mRNA + GTP + H(+) = a 5'-end (5'-triphosphoguanosine)-ribonucleoside in mRNA + diphosphate. The catalysed reaction is a 5'-end (5'-triphosphoguanosine)-ribonucleoside in mRNA + S-adenosyl-L-methionine = a 5'-end (N(7)-methyl 5'-triphosphoguanosine)-ribonucleoside in mRNA + S-adenosyl-L-homocysteine. Functionally, the replicase polyprotein of coronaviruses is a multifunctional protein: it contains the activities necessary for the transcription of negative stranded RNA, leader RNA, subgenomic mRNAs and progeny virion RNA as well as proteinases responsible for the cleavage of the polyprotein into functional products. Inhibits host translation by interacting with the 40S ribosomal subunit. The nsp1-40S ribosome complex further induces an endonucleolytic cleavage near the 5'UTR of host mRNAs, targeting them for degradation. Viral mRNAs are not susceptible to nsp1-mediated endonucleolytic RNA cleavage thanks to the presence of a 5'-end leader sequence and are therefore protected from degradation. By suppressing host gene expression, nsp1 facilitates efficient viral gene expression in infected cells and evasion from host immune response. Its function is as follows. May play a role in the modulation of host cell survival signaling pathway by interacting with host PHB and PHB2. Indeed, these two proteins play a role in maintaining the functional integrity of the mitochondria and protecting cells from various stresses. In terms of biological role, responsible for the cleavages located at the N-terminus of the replicase polyprotein. In addition, PL-PRO possesses a deubiquitinating/deISGylating activity and processes both 'Lys-48'- and 'Lys-63'-linked polyubiquitin chains from cellular substrates. Participates together with nsp4 in the assembly of virally-induced cytoplasmic double-membrane vesicles necessary for viral replication. Antagonizes innate immune induction of type I interferon by blocking the phosphorylation, dimerization and subsequent nuclear translocation of host IRF3. Also prevents host NF-kappa-B signaling. Functionally, participates in the assembly of virally-induced cytoplasmic double-membrane vesicles necessary for viral replication. Cleaves the C-terminus of replicase polyprotein at 11 sites. Recognizes substrates containing the core sequence [ILMVF]-Q-|-[SGACN]. Also able to bind an ADP-ribose-1''-phosphate (ADRP). Its function is as follows. Plays a role in the initial induction of autophagosomes from host endoplasmic reticulum. Later, limits the expansion of these phagosomes that are no longer able to deliver viral components to lysosomes. In terms of biological role, forms a hexadecamer with nsp8 (8 subunits of each) that may participate in viral replication by acting as a primase. Alternatively, may synthesize substantially longer products than oligonucleotide primers. Functionally, forms a hexadecamer with nsp7 (8 subunits of each) that may participate in viral replication by acting as a primase. Alternatively, may synthesize substantially longer products than oligonucleotide primers. Forms a primer, NSP9-pU, which is utilized by the polymerase for the initiation of RNA chains. Interacts with ribosome signal recognition particle RNA (SRP). Together with NSP8, suppress protein integration into the cell membrane, thereby disrupting host immune defenses. Its function is as follows. Plays a pivotal role in viral transcription by stimulating both nsp14 3'-5' exoribonuclease and nsp16 2'-O-methyltransferase activities. Therefore plays an essential role in viral mRNAs cap methylation. In terms of biological role, RNA-directed RNA polymerase that catalyzes the transcription of viral genomic and subgenomic RNAs. Acts in complex with nsp7 and nsp8 to transcribe both the minus and positive strands of genomic RNA. The kinase-like NiRAN domain of NSP12 attaches one or more nucleotides to the amino terminus of NSP9, forming a covalent RNA-protein intermediate that serves as transcription/replication primer. Subgenomic RNAs (sgRNAs) are formed by discontinuous transcription: The polymerase has the ability to pause at transcription-regulating sequences (TRS) and jump to the leader TRS, resulting in a major deletion. This creates a series of subgenomic RNAs that are replicated, transcribed and translated. In addition, Nsp12 is a subunit of the viral RNA capping enzyme that catalyzes the RNA guanylyltransferase reaction for genomic and sub-genomic RNAs. Subsequently, the NiRAN domain transfers RNA to GDP, and forms the core cap structure GpppA-RNA. Functionally, multi-functional protein with a zinc-binding domain in N-terminus displaying RNA and DNA duplex-unwinding activities with 5' to 3' polarity. Activity of helicase is dependent on magnesium. Plays a role in viral RNA synthesis through two distinct activities. The N7-guanine methyltransferase activity plays a role in the formation of the cap structure GpppA-RNA. The proofreading exoribonuclease reduces the sensitivity of the virus to RNA mutagens during replication. This activity acts on both ssRNA and dsRNA in a 3'-5' direction. Its function is as follows. Plays a role in viral transcription/replication and prevents the simultaneous activation of host cell dsRNA sensors, such as MDA5/IFIH1, OAS, and PKR. Acts by degrading the 5'-polyuridines generated during replication of the poly(A) region of viral genomic and subgenomic RNAs. Catalyzes a two-step reaction in which a 2'3'-cyclic phosphate (2'3'-cP) is first generated by 2'-O transesterification, which is then hydrolyzed to a 3'-phosphate (3'-P). If not degraded, poly(U) RNA would hybridize with poly(A) RNA tails and activate host dsRNA sensors. In terms of biological role, methyltransferase that mediates mRNA cap 2'-O-ribose methylation to the 5'-cap structure of viral mRNAs. N7-methyl guanosine cap is a prerequisite for binding of nsp16. Therefore plays an essential role in viral mRNAs cap methylation which is essential to evade immune system. In Bos taurus (Bovine), this protein is Replicase polyprotein 1ab (rep).